The following is a 349-amino-acid chain: Glucose 1-dehydrogenase 1 (349 aa).

Cysteine 39 is a binding site for Zn(2+). Residue threonine 41 participates in substrate binding. Zn(2+) contacts are provided by histidine 64 and glutamate 65. Positions 110 and 146 each coordinate substrate. Glutamate 146 serves as a coordination point for Zn(2+). Residues 178–181 (AGPI), 260–262 (LGV), and 289–291 (SVN) contribute to the NADP(+) site. Asparagine 291 is a binding site for substrate.

This sequence belongs to the zinc-containing alcohol dehydrogenase family. Glucose 1-dehydrogenase subfamily. Zn(2+) is required as a cofactor.

It carries out the reaction D-glucose + NAD(+) = D-glucono-1,5-lactone + NADH + H(+). The enzyme catalyses D-glucose + NADP(+) = D-glucono-1,5-lactone + NADPH + H(+). Its function is as follows. Catalyzes the NAD(P)(+)-dependent oxidation of D-glucose to D-gluconate via gluconolactone. Can utilize both NAD(+) and NADP(+) as electron acceptor. Is involved in the degradation of glucose through a non-phosphorylative variant of the Entner-Doudoroff pathway. In Caldivirga maquilingensis (strain ATCC 700844 / DSM 13496 / JCM 10307 / IC-167), this protein is Glucose 1-dehydrogenase 1.